The primary structure comprises 555 residues: Formate--tetrahydrofolate ligase (555 aa).

64–71 contributes to the ATP binding site; it reads TKAGIGKT.

It belongs to the formate--tetrahydrofolate ligase family.

The catalysed reaction is (6S)-5,6,7,8-tetrahydrofolate + formate + ATP = (6R)-10-formyltetrahydrofolate + ADP + phosphate. Its pathway is one-carbon metabolism; tetrahydrofolate interconversion. In Bacteroides fragilis (strain ATCC 25285 / DSM 2151 / CCUG 4856 / JCM 11019 / LMG 10263 / NCTC 9343 / Onslow / VPI 2553 / EN-2), this protein is Formate--tetrahydrofolate ligase.